The chain runs to 440 residues: Thymidine phosphorylase (440 aa).

This sequence belongs to the thymidine/pyrimidine-nucleoside phosphorylase family. In terms of assembly, homodimer.

It catalyses the reaction thymidine + phosphate = 2-deoxy-alpha-D-ribose 1-phosphate + thymine. The protein operates within pyrimidine metabolism; dTMP biosynthesis via salvage pathway; dTMP from thymine: step 1/2. Functionally, the enzymes which catalyze the reversible phosphorolysis of pyrimidine nucleosides are involved in the degradation of these compounds and in their utilization as carbon and energy sources, or in the rescue of pyrimidine bases for nucleotide synthesis. The sequence is that of Thymidine phosphorylase from Salmonella arizonae (strain ATCC BAA-731 / CDC346-86 / RSK2980).